Reading from the N-terminus, the 317-residue chain is MKAWQELTITVHREAEEAVSNLLIEAGSQGVAINDTADYIGQEDRFGELYPAVEQSEMVTITAYYPSSADIDDIRQTINQGLNRLKQCDVELGELTLTNQELAEEDWADNWKAYYEPARITHDLTIVPSWTDYEATAGEKIIRLDPGMAFGTGTHPTTKLSLFALEQVLRGGETVIDVGTGSGVLSIASSLLGAKEVFAYDLDDVAVRVAKDNIALNQATDNIHVAAGDLLKGLTQEADVIVANILADILVHVTADAYRLIKSEGYLIMSGIISEKLDMVKQAALNAGFLLETHMLQGEWNALIFKKTDDLSGVIGG.

Positions 158, 179, 201, and 244 each coordinate S-adenosyl-L-methionine.

The protein belongs to the methyltransferase superfamily. PrmA family.

The protein localises to the cytoplasm. It carries out the reaction L-lysyl-[protein] + 3 S-adenosyl-L-methionine = N(6),N(6),N(6)-trimethyl-L-lysyl-[protein] + 3 S-adenosyl-L-homocysteine + 3 H(+). In terms of biological role, methylates ribosomal protein L11. This chain is Ribosomal protein L11 methyltransferase, found in Streptococcus equi subsp. equi (strain 4047).